A 633-amino-acid polypeptide reads, in one-letter code: Lysophospholipase 1 (633 aa).

Positions 1-20 (MKTTTVACAVAGLLFSCVSG) are cleaved as a signal peptide. One can recognise a PLA2c domain in the interval 47-594 (GCPASRPTIR…QRYCWDGSLN (548 aa)). Residues N64, N104, N139, N173, N246, N290, N329, N358, N397, N450, N463, N469, N497, N500, N521, N549, N555, and N594 are each glycosylated (N-linked (GlcNAc...) asparagine). A lipid anchor (GPI-like-anchor amidated serine) is attached at S609. Residues 610-633 (AASGIIPSISTVAMAVVFAAWTIF) constitute a propeptide, removed in mature form.

This sequence belongs to the lysophospholipase family. The GPI-like anchor contains a phosphoceramide lipid group. The anchor position has not been determined.

It localises to the cell membrane. It carries out the reaction a 1-acyl-sn-glycero-3-phosphocholine + H2O = sn-glycerol 3-phosphocholine + a fatty acid + H(+). Its function is as follows. Catalyzes the release of fatty acids from lysophospholipids. The polypeptide is Lysophospholipase 1 (plb1) (Aspergillus fumigatus (strain CBS 144.89 / FGSC A1163 / CEA10) (Neosartorya fumigata)).